The primary structure comprises 780 residues: Exocyst complex component 3-like protein (780 aa).

It belongs to the SEC6 family.

It is found in the cytoplasmic vesicle. The protein resides in the secretory vesicle. Functionally, as part of the exocyst, may play a role in regulated exocytosis. This chain is Exocyst complex component 3-like protein (exoc3l1), found in Danio rerio (Zebrafish).